The chain runs to 2207 residues: Desmoplakin-B (2207 aa).

Coiled coils occupy residues 506-916, 952-1000, and 1029-1063; these read MEEL…EAGK, AKHA…EQGR, and TERL…LLKN. Basic and acidic residues predominate over residues 905 to 924; it reads KQRQVAEEEAGKRRRTESQL. The segment at 905–933 is disordered; the sequence is KQRQVAEEEAGKRRRTESQLEKSSQAMRE. Plectin repeat units lie at residues 1369–1406, 1407–1445, 1446–1483, 1571–1609, 1610–1647, 1685–1723, 1783–1811, 1992–2029, and 2068–2106; these read LLEA…DKKQ, LLIA…TLRL, LQAQ…YQAL, YLRG…TLEL, LEAQ…KDKL, LLEA…NQIL, IVDP…FLEL, LLEA…MANR, and FLEF…AQRL. Residues 2155 to 2164 show a composition bias toward polar residues; that stretch reads ISSPYNLSNP. A disordered region spans residues 2155–2207; sequence ISSPYNLSNPGSASGSRSGSRRGSVDYSLSPSSSSRYSSFSYSRTSFSSRSLS. Low complexity predominate over residues 2165–2207; it reads GSASGSRSGSRRGSVDYSLSPSSSSRYSSFSYSRTSFSSRSLS.

This sequence belongs to the plakin or cytolinker family.

It localises to the cell junction. It is found in the desmosome. The protein localises to the cell membrane. Functionally, involved in the organization of desmosome cell-cell junctions. Of particular importance in cell adhesion in the skin and during cardiac development. May also play a role in the regulation of Wnt, TGF-beta and Hippo signaling pathways. The sequence is that of Desmoplakin-B from Danio rerio (Zebrafish).